The sequence spans 296 residues: Protoheme IX farnesyltransferase (296 aa).

The next 9 helical transmembrane spans lie at 9 to 29 (VTKP…FLLA), 36 to 56 (YPLF…GCVF), 75 to 95 (VLVK…VLGI), 99 to 119 (LLLY…GFVI), 133 to 153 (VYGT…GYCA), 163 to 183 (LILL…IAIF), 209 to 229 (ITLY…SGYA), 234 to 254 (LVVA…GYKA), and 265 to 285 (FVFS…DFNV).

This sequence belongs to the UbiA prenyltransferase family. Protoheme IX farnesyltransferase subfamily.

Its subcellular location is the cell inner membrane. It carries out the reaction heme b + (2E,6E)-farnesyl diphosphate + H2O = Fe(II)-heme o + diphosphate. The protein operates within porphyrin-containing compound metabolism; heme O biosynthesis; heme O from protoheme: step 1/1. Functionally, converts heme B (protoheme IX) to heme O by substitution of the vinyl group on carbon 2 of heme B porphyrin ring with a hydroxyethyl farnesyl side group. The sequence is that of Protoheme IX farnesyltransferase from Yersinia pestis bv. Antiqua (strain Antiqua).